The following is a 279-amino-acid chain: Urease accessory protein UreD (279 aa).

This sequence belongs to the UreD family. As to quaternary structure, ureD, UreF and UreG form a complex that acts as a GTP-hydrolysis-dependent molecular chaperone, activating the urease apoprotein by helping to assemble the nickel containing metallocenter of UreC. The UreE protein probably delivers the nickel.

Its subcellular location is the cytoplasm. Its function is as follows. Required for maturation of urease via the functional incorporation of the urease nickel metallocenter. In Pseudomonas fluorescens (strain ATCC BAA-477 / NRRL B-23932 / Pf-5), this protein is Urease accessory protein UreD.